Reading from the N-terminus, the 258-residue chain is 1-(5-phosphoribosyl)-5-[(5-phosphoribosylamino)methylideneamino] imidazole-4-carboxamide isomerase 2 (258 aa).

Residue D14 is the Proton acceptor of the active site. The Proton donor role is filled by D140.

It belongs to the HisA/HisF family.

The protein resides in the cytoplasm. The catalysed reaction is 1-(5-phospho-beta-D-ribosyl)-5-[(5-phospho-beta-D-ribosylamino)methylideneamino]imidazole-4-carboxamide = 5-[(5-phospho-1-deoxy-D-ribulos-1-ylimino)methylamino]-1-(5-phospho-beta-D-ribosyl)imidazole-4-carboxamide. The protein operates within amino-acid biosynthesis; L-histidine biosynthesis; L-histidine from 5-phospho-alpha-D-ribose 1-diphosphate: step 4/9. This is 1-(5-phosphoribosyl)-5-[(5-phosphoribosylamino)methylideneamino] imidazole-4-carboxamide isomerase 2 (hisA2) from Photorhabdus laumondii subsp. laumondii (strain DSM 15139 / CIP 105565 / TT01) (Photorhabdus luminescens subsp. laumondii).